Here is a 298-residue protein sequence, read N- to C-terminus: Probable deoxyhypusine synthase 2 (298 aa).

K259 functions as the Nucleophile in the catalytic mechanism.

It belongs to the deoxyhypusine synthase family. Requires NAD(+) as cofactor.

It catalyses the reaction [eIF5A protein]-L-lysine + spermidine = [eIF5A protein]-deoxyhypusine + propane-1,3-diamine. The protein operates within protein modification; eIF5A hypusination. In terms of biological role, catalyzes the NAD-dependent oxidative cleavage of spermidine and the subsequent transfer of the butylamine moiety of spermidine to the epsilon-amino group of a specific lysine residue of the eIF-5A precursor protein to form the intermediate deoxyhypusine residue. The protein is Probable deoxyhypusine synthase 2 (dys2) of Archaeoglobus fulgidus (strain ATCC 49558 / DSM 4304 / JCM 9628 / NBRC 100126 / VC-16).